The chain runs to 141 residues: Transcriptional regulator MraZ (141 aa).

2 consecutive SpoVT-AbrB domains span residues 5 to 47 (EYNH…PNEE) and 75 to 118 (AADC…SKER).

The protein belongs to the MraZ family. In terms of assembly, forms oligomers.

It is found in the cytoplasm. The protein localises to the nucleoid. The chain is Transcriptional regulator MraZ from Lachnoclostridium phytofermentans (strain ATCC 700394 / DSM 18823 / ISDg) (Clostridium phytofermentans).